A 509-amino-acid chain; its full sequence is Legumin A (509 aa).

Residues 1–21 (MAINPSLLFLSLLFLFNGCLA) form the signal peptide. Intrachain disulfides connect Cys34/Cys67 and Cys110/Cys331. In terms of domain architecture, Cupin type-1 1 spans 39–273 (LRASAPQTRI…AFNVDHDIIR (235 aa)). 2 disordered regions span residues 187–248 (AGNP…ESSS) and 298–325 (PRME…QDNG). Residues 212 to 228 (EESEEEEGEGEEEEEED) show a composition bias toward acidic residues. The span at 299 to 314 (RMEEEEREERQQEQRY) shows a compositional bias: basic and acidic residues. A Cupin type-1 2 domain is found at 337–486 (ENLADPERAD…SYQVSREDAR (150 aa)).

It belongs to the 11S seed storage protein (globulins) family. Hexamer; each subunit is composed of an acidic and a basic chain derived from a single precursor and linked by a disulfide bond.

In terms of biological role, this is a seed storage protein. This chain is Legumin A (LEGA), found in Gossypium hirsutum (Upland cotton).